A 1098-amino-acid chain; its full sequence is Contactin-5 (1098 aa).

The first 23 residues, 1–23 (MASCWRLILFLSVTRWLSDYSEA), serve as a signal peptide directing secretion. Ig-like C2-type domains are found at residues 98-189 (PVFV…ATLQ), 195-281 (NFSG…RVLS), 299-384 (PKIE…GQLQ), 389-473 (PHWV…AELK), 479-568 (PSFE…LSVK), and 570-659 (PTRI…DSVS). A disulfide bond links C122 and C172. N-linked (GlcNAc...) asparagine glycans are attached at residues N137 and N195. Cystine bridges form between C216-C268 and C321-C368. N-linked (GlcNAc...) asparagine glycosylation is found at N396, N448, and N539. 3 disulfide bridges follow: C410-C457, C502-C550, and C592-C649. 4 Fibronectin type-III domains span residues 672–770 (PPGV…TNEA), 775–872 (APSN…SAEG), 877–971 (APTD…TKRH), and 976–1066 (PPGN…SYSG). 3 N-linked (GlcNAc...) asparagine glycosylation sites follow: N778, N815, and N930. Residues 956–982 (GYGPPSREASTTTKRHPPREPPGNLRW) are disordered. The N-linked (GlcNAc...) asparagine glycan is linked to N1001. S1071 is lipidated: GPI-anchor amidated serine. The propeptide at 1072-1098 (AQSTLHSLSKWSSVTLLLALMLPSSSW) is removed in mature form.

The protein belongs to the immunoglobulin superfamily. Contactin family. Interacts with PTPRG. Expressed in the nervous system. Preferentially expressed in the central auditory pathways.

Its subcellular location is the cell membrane. In terms of biological role, contactins mediate cell surface interactions during nervous system development. Has some neurite outgrowth-promoting activity in the cerebral cortical neurons but not in hippocampal neurons. Involved in neuronal activity in the auditory system. The protein is Contactin-5 (Cntn5) of Mus musculus (Mouse).